Here is a 552-residue protein sequence, read N- to C-terminus: Cytochrome P450 monooxyhenase eriI (552 aa).

The chain crosses the membrane as a helical span at residues 9 to 26 (FALKASAAVAVLLLAAWV). 2 N-linked (GlcNAc...) asparagine glycosylation sites follow: asparagine 50 and asparagine 447. Heme is bound at residue cysteine 495.

The protein belongs to the cytochrome P450 family. Requires heme as cofactor.

The protein localises to the membrane. It carries out the reaction (-)-cyatha-3,12-diene + reduced [NADPH--hemoprotein reductase] + O2 = erinacol + oxidized [NADPH--hemoprotein reductase] + H2O + H(+). It functions in the pathway secondary metabolite biosynthesis. Its function is as follows. Cytochrome P450 monooxygenase; part of the gene cluster that mediates the biosynthesis of erinacines, cyathane-xylosides that show unique biological activities, including leishmanicidal activity, stimulating activity for nerve growth-factor synthesis, and agonistic activity toward the kappa opioid receptor. Within the pathway, eriI hydroxylates cyatha-3,12-diene at C-14 of the seven-membered ring to yield erinacol. The first step of the erinacines biosynthesis pathway is catalyzed by the geranylgeranyl diphosphate (GGPP) synthase eriE via conversion of farnesyl pyrophosphate and isopentyl pyrophosphate into geranylgeranyl pyrophosphate (GGPP). GGPP is then substrate of the diterpene cyclase eriG for the production of cyatha-3,12-diene. The cytochrome P450 monooxygenase eriI then hydroxylates cyatha-3,12-diene at C-14 of the seven-membered ring to produce erinacol, which is further hydroxylated at C-15 by the cytochrome P450 monooxygenase eriC to yield cyathadiol. The cytochrome P450 monooxygenase eriA then catalyzes C-11 hydroxylation in the presence of the short chain dehydrogenase/reductase (SDR) eriH, which leads to the production of cyathatriol. The acetyltransferase eriL converts cyathatriol into 11-O-acetyl-cyathatriol. The SDR eriH catalyzes further oxidation of 11-O-acetyl-cyathatriol into 1-O-acetylcyathin A3. Finally, the glycosyl transferase eriJ tranfers xylose from UDP-xylose onto C-14 of 11-O-acetyl-cyathatriol to form eracine Q. EriJ is also able to convert 11-O-acetyl-cyathatriol to eracine Q2 by using UDP-D-glucose as cosubstrate, but at a lower rate. Functionally, cytochrome P450 monooxygenase; part of the gene cluster that mediates the biosynthesis of erinacines, cyathane-xylosides that show unique biological activities, including leishmanicidal activity, stimulating activity for nerve growth-factor synthesis, and agonistic activity toward the kappa opioid receptor. The geranylgeranyl diphosphate (GGPP) synthase eriE catalyzes the first step in erinacines biosynthesis via conversion of farnesyl pyrophosphate and isopentyl pyrophosphate into geranylgeranyl pyrophosphate (GGPP). GGPP is then substrate of the diterpene cyclase eriG for the production of cyatha-3,12-diene. EriG is unable to use geranyl diphosphate (GPP) or farnesyl diphosphate (FPP) as substrates. The cytochrome P450 monooxygenase eriI then hydroxylates cyatha-3,12-diene at C-14 of the seven-membered ring to produce erinacol, which is further hydroxylated at C-15 by the cytochrome P450 monooxygenase eriC to yield cyathadiol. The cytochrome P450 monooxygenase eriA then catalyzes C-11 hydroxylation in the presence of the short chain dehydrogenase/reductase (SDR) eriH, which leads to the production of cyathatriol. The acetyltransferase eriL converts cyathatriol into 11-O-acetyl-cyathatriol. The SDR eriH catalyzes further oxidation of 11-O-acetyl-cyathatriol into 1-O-acetylcyathin A3. Finally, the glycosyl transferase eriJ tranfers xylose from UDP-xylose onto C-14 of 11-O-acetyl-cyathatriol to form eracine Q. EriJ is also able to convert 11-O-acetyl-cyathatriol to eracine Q2 by using UDP-D-glucose as cosubstrate, but at a lower rate. In the absence of eriL and eriJ, the SDR eriH is able to convert cyathatriol to cyathin A3; this is likely a switching mechanism in the biosynthesis of cyathins (C-14 ketogroup)and erinacines (C-14 glycosylated group). The roles of the SDR eriB, the polyprenyl transferase eriF and the dehydrogenase eriK have still to be identified. In Hericium erinaceus (Lion's mane mushroom), this protein is Cytochrome P450 monooxyhenase eriI.